The chain runs to 548 residues: Membrane protein insertase YidC (548 aa).

The helical transmembrane segment at 6–26 threads the bilayer; it reads NLLIIALLFVSFMIWQAWEQD. The disordered stretch occupies residues 28–52; sequence NPQPQQQTTQTTTTAAGSAADQGVP. Low complexity predominate over residues 29 to 41; it reads PQPQQQTTQTTTT. Helical transmembrane passes span 345-365, 420-440, 458-478, and 499-519; these read KFIH…TFIV, LGGC…YYML, LSAQ…MFFI, and PVIF…YYIV.

This sequence belongs to the OXA1/ALB3/YidC family. Type 1 subfamily. In terms of assembly, interacts with the Sec translocase complex via SecD. Specifically interacts with transmembrane segments of nascent integral membrane proteins during membrane integration.

The protein resides in the cell inner membrane. Functionally, required for the insertion and/or proper folding and/or complex formation of integral membrane proteins into the membrane. Involved in integration of membrane proteins that insert both dependently and independently of the Sec translocase complex, as well as at least some lipoproteins. Aids folding of multispanning membrane proteins. This chain is Membrane protein insertase YidC, found in Klebsiella pneumoniae subsp. pneumoniae (strain ATCC 700721 / MGH 78578).